Consider the following 226-residue polypeptide: MLTQQELKQQAAEAALELVEQVAGPDVIIGVGTGSTADLFIDGLARFKGRLRGTVASSERSAARLAGHGLAVLDLNDVQSMPIYVDGADEIDPNLHMIKGGGGALTREKIVASVARRYICIADESKLVERLGRFPLPVEVIPMARNAVARGLSRLGGQPALREGFVTDNGNIILDVAGLSIADAPGLEKTINDIPGVVTCGLFALAGADVALLATQDGIRRLERRG.

Substrate-binding positions include 33 to 36, 86 to 89, and 99 to 102; these read TGST, DGAD, and KGGG. The active-site Proton acceptor is the Glu-108. Lys-126 is a substrate binding site.

The protein belongs to the ribose 5-phosphate isomerase family. Homodimer.

The enzyme catalyses aldehydo-D-ribose 5-phosphate = D-ribulose 5-phosphate. Its pathway is carbohydrate degradation; pentose phosphate pathway; D-ribose 5-phosphate from D-ribulose 5-phosphate (non-oxidative stage): step 1/1. In terms of biological role, catalyzes the reversible conversion of ribose-5-phosphate to ribulose 5-phosphate. The protein is Ribose-5-phosphate isomerase A of Bordetella bronchiseptica (strain ATCC BAA-588 / NCTC 13252 / RB50) (Alcaligenes bronchisepticus).